We begin with the raw amino-acid sequence, 276 residues long: 2-dehydro-3-deoxyphosphooctonate aldolase (276 aa).

Belongs to the KdsA family.

The protein resides in the cytoplasm. It carries out the reaction D-arabinose 5-phosphate + phosphoenolpyruvate + H2O = 3-deoxy-alpha-D-manno-2-octulosonate-8-phosphate + phosphate. It participates in carbohydrate biosynthesis; 3-deoxy-D-manno-octulosonate biosynthesis; 3-deoxy-D-manno-octulosonate from D-ribulose 5-phosphate: step 2/3. The protein operates within bacterial outer membrane biogenesis; lipopolysaccharide biosynthesis. This Helicobacter pylori (strain P12) protein is 2-dehydro-3-deoxyphosphooctonate aldolase.